The following is a 222-amino-acid chain: Putative N-acetylmannosamine-6-phosphate 2-epimerase (222 aa).

It belongs to the NanE family.

The enzyme catalyses an N-acyl-D-glucosamine 6-phosphate = an N-acyl-D-mannosamine 6-phosphate. The protein operates within amino-sugar metabolism; N-acetylneuraminate degradation; D-fructose 6-phosphate from N-acetylneuraminate: step 3/5. Its function is as follows. Converts N-acetylmannosamine-6-phosphate (ManNAc-6-P) to N-acetylglucosamine-6-phosphate (GlcNAc-6-P). The chain is Putative N-acetylmannosamine-6-phosphate 2-epimerase from Staphylococcus saprophyticus subsp. saprophyticus (strain ATCC 15305 / DSM 20229 / NCIMB 8711 / NCTC 7292 / S-41).